The chain runs to 413 residues: Multifunctional CCA protein (413 aa).

The ATP site is built by G8 and R11. The CTP site is built by G8 and R11. Mg(2+) is bound by residues D21 and D23. The ATP site is built by R91, R137, and R140. 3 residues coordinate CTP: R91, R137, and R140. The HD domain maps to 228–329 (TGVHTLMTLS…VKLFDAIDAW (102 aa)).

Belongs to the tRNA nucleotidyltransferase/poly(A) polymerase family. Bacterial CCA-adding enzyme type 1 subfamily. As to quaternary structure, monomer. Can also form homodimers and oligomers. Mg(2+) serves as cofactor. It depends on Ni(2+) as a cofactor.

It catalyses the reaction a tRNA precursor + 2 CTP + ATP = a tRNA with a 3' CCA end + 3 diphosphate. It carries out the reaction a tRNA with a 3' CCA end + 2 CTP + ATP = a tRNA with a 3' CCACCA end + 3 diphosphate. Functionally, catalyzes the addition and repair of the essential 3'-terminal CCA sequence in tRNAs without using a nucleic acid template. Adds these three nucleotides in the order of C, C, and A to the tRNA nucleotide-73, using CTP and ATP as substrates and producing inorganic pyrophosphate. tRNA 3'-terminal CCA addition is required both for tRNA processing and repair. Also involved in tRNA surveillance by mediating tandem CCA addition to generate a CCACCA at the 3' terminus of unstable tRNAs. While stable tRNAs receive only 3'-terminal CCA, unstable tRNAs are marked with CCACCA and rapidly degraded. The chain is Multifunctional CCA protein from Salmonella choleraesuis (strain SC-B67).